A 106-amino-acid polypeptide reads, in one-letter code: Putative double-stranded DNA mimic protein VCM66_1163 (106 aa).

This sequence belongs to the putative dsDNA mimic protein family.

In terms of biological role, may act as a double-stranded DNA (dsDNA) mimic. Probably regulates the activity of a dsDNA-binding protein. In Vibrio cholerae serotype O1 (strain M66-2), this protein is Putative double-stranded DNA mimic protein VCM66_1163.